Consider the following 832-residue polypeptide: tRNA ligase (832 aa).

Lysine 108 acts as the N6-AMP-lysine intermediate in catalysis.

It belongs to the TRL1 family.

It carries out the reaction ATP + (ribonucleotide)n-3'-hydroxyl + 5'-phospho-(ribonucleotide)m = (ribonucleotide)n+m + AMP + diphosphate.. Functionally, one of the two proteins required for the splicing of precursor tRNA molecules containing introns. The ligation activity requires three enzymatic activities: phosphorylation of the 5' terminus of the 3' half-tRNA in the presence of ATP, opening of the 2'3'-cyclic phosphodiester bond of the 5' half-tRNA leaving a 2'-phosphomonoester and ligation of the two tRNA halves in an ATP-dependent reaction. In Candida albicans (strain SC5314 / ATCC MYA-2876) (Yeast), this protein is tRNA ligase (LIG1).